Here is a 593-residue protein sequence, read N- to C-terminus: CTD kinase subunit alpha (593 aa).

2 stretches are compositionally biased toward polar residues: residues 1 to 17 (MSYS…TEPN) and 29 to 51 (QLSG…FKNN). Residues 1–262 (MSYSKSTIYR…ESVPAPLPSP (262 aa)) are disordered. Residues Ser56 and Ser58 each carry the phosphoserine modification. Over residues 90–103 (RSRKSRRRKGKKAF) the composition is skewed to basic residues. Phosphoserine occurs at positions 104 and 109. A compositionally biased stretch (low complexity) spans 139 to 152 (SSSSASVSPISPSA). Residues 160-170 (QASSFRRSPPS) show a composition bias toward polar residues. Over residues 198 to 215 (IPHETTSSDTQKKSSVSS) the composition is skewed to low complexity. In terms of domain architecture, Protein kinase spans 277-561 (YEKIDQIGEG…AHETLMHEYF (285 aa)). Residues 283–291 (IGEGTYGKV) and Lys306 each bind ATP. Asp399 functions as the Proton acceptor in the catalytic mechanism.

This sequence belongs to the protein kinase superfamily. CMGC Ser/Thr protein kinase family. CDC2/CDKX subfamily. CTDK-I consists of three subunits, ctk1/lsk1, ctk2/lsc1 and ctk3 (also called alpha, beta and gamma). Interacts with ctk2/lsc1. This interaction is dependent on kinase activity.

It localises to the nucleus. It is found in the nucleolus. The enzyme catalyses [DNA-directed RNA polymerase] + ATP = phospho-[DNA-directed RNA polymerase] + ADP + H(+). Its function is as follows. Catalytic subunit of the CTDK-I complex, which hyperphosphorylates the C-terminal heptapeptide repeat domain (CTD) of the largest RNA polymerase II subunit. Involved in RNA polymerase II transcriptional elongation and pre-mRNA 3'-end processing. Together with ctk2/lsc1, required for the regulation of cytokinesis by phosphorylating 'Ser-2' residues found in the heptad repeats of the CTD. Required for nuclear localization of ctk2/lsc1. Positively regulates the septation initiation network (SIN) and promotes successful completion of cytokinesis in response to perturbation of the actomyosin ring. Acts in parallel to clp1 to promote actomyosin ring stability upon cytokinesis checkpoint activation. The sequence is that of CTD kinase subunit alpha from Schizosaccharomyces pombe (strain 972 / ATCC 24843) (Fission yeast).